A 152-amino-acid chain; its full sequence is Troponin C (152 aa).

Thr1 carries the N-acetylthreonine modification. EF-hand domains follow at residues Lys9 to Leu44, Val45 to Glu80, Leu82 to Glu117, and Leu118 to Ala152. Residues Asp131, Asp133, Ser135, Thr137, and Glu142 each coordinate Ca(2+).

Belongs to the troponin C family.

Troponin is the central regulatory protein of striated muscle contraction. Tn consists of three components: Tn-I which is the inhibitor of actomyosin ATPase, Tn-T which contains the binding site for tropomyosin and Tn-C. The binding of calcium to Tn-C abolishes the inhibitory action of Tn on actin filaments. The polypeptide is Troponin C (Mizuhopecten yessoensis (Japanese scallop)).